The sequence spans 244 residues: Orotidine 5'-phosphate decarboxylase (244 aa).

Substrate is bound by residues D14, K36, 63 to 72 (DLKFHDIPNT), T127, R188, Q197, G217, and R218. K65 functions as the Proton donor in the catalytic mechanism.

The protein belongs to the OMP decarboxylase family. Type 1 subfamily. In terms of assembly, homodimer.

It catalyses the reaction orotidine 5'-phosphate + H(+) = UMP + CO2. It functions in the pathway pyrimidine metabolism; UMP biosynthesis via de novo pathway; UMP from orotate: step 2/2. In terms of biological role, catalyzes the decarboxylation of orotidine 5'-monophosphate (OMP) to uridine 5'-monophosphate (UMP). In Syntrophotalea carbinolica (strain DSM 2380 / NBRC 103641 / GraBd1) (Pelobacter carbinolicus), this protein is Orotidine 5'-phosphate decarboxylase.